Here is a 534-residue protein sequence, read N- to C-terminus: Calcium-dependent protein kinase 29 (534 aa).

The segment at methionine 1–proline 72 is disordered. Residue glycine 2 is the site of N-myristoyl glycine attachment. A compositionally biased stretch (low complexity) spans isoleucine 16–proline 27. Over residues asparagine 49–serine 63 the composition is skewed to pro residues. The 259-residue stretch at tyrosine 85–methionine 343 folds into the Protein kinase domain. Residues leucine 91–threonine 99 and lysine 114 each bind ATP. Residue aspartate 209 is the Proton acceptor of the active site. The residue at position 249 (serine 249) is a Phosphoserine. The interval isoleucine 348 to isoleucine 378 is autoinhibitory domain. EF-hand domains follow at residues glutamate 385 to lysine 420, leucine 421 to leucine 456, glutamate 457 to glycine 492, and aspartate 493 to aspartate 527. Ca(2+) is bound by residues aspartate 398, aspartate 400, serine 402, threonine 404, glutamate 409, aspartate 434, aspartate 436, serine 438, threonine 440, glutamate 445, aspartate 470, aspartate 472, serine 474, glutamate 481, aspartate 505, aspartate 507, aspartate 509, arginine 511, and glutamate 516.

The protein belongs to the protein kinase superfamily. Ser/Thr protein kinase family. CDPK subfamily.

The protein resides in the membrane. The catalysed reaction is L-seryl-[protein] + ATP = O-phospho-L-seryl-[protein] + ADP + H(+). It carries out the reaction L-threonyl-[protein] + ATP = O-phospho-L-threonyl-[protein] + ADP + H(+). With respect to regulation, activated by calcium. Autophosphorylation may play an important role in the regulation of the kinase activity. In terms of biological role, may play a role in signal transduction pathways that involve calcium as a second messenger. This is Calcium-dependent protein kinase 29 (CPK29) from Arabidopsis thaliana (Mouse-ear cress).